Here is a 228-residue protein sequence, read N- to C-terminus: Lipoprotein-releasing system ATP-binding protein LolD (228 aa).

Residues Phe-5–Tyr-228 enclose the ABC transporter domain. Gly-40–Ser-47 lines the ATP pocket.

The protein belongs to the ABC transporter superfamily. Lipoprotein translocase (TC 3.A.1.125) family. In terms of assembly, the complex is composed of two ATP-binding proteins (LolD) and two transmembrane proteins (LolC and LolE).

The protein resides in the cell inner membrane. Functionally, part of the ABC transporter complex LolCDE involved in the translocation of mature outer membrane-directed lipoproteins, from the inner membrane to the periplasmic chaperone, LolA. Responsible for the formation of the LolA-lipoprotein complex in an ATP-dependent manner. This is Lipoprotein-releasing system ATP-binding protein LolD from Ehrlichia ruminantium (strain Gardel).